The sequence spans 478 residues: Putative multidrug resistance outer membrane protein MdtQ (478 aa).

Residues 1-21 form the signal peptide; that stretch reads MNRDSFYPAIACFPLLLMLAG. Cys-22 carries N-palmitoyl cysteine lipidation. Residue Cys-22 is the site of S-diacylglycerol cysteine attachment.

The protein belongs to the outer membrane factor (OMF) (TC 1.B.17) family.

The protein resides in the cell outer membrane. Could be involved in resistance to puromycin, acriflavine and tetraphenylarsonium chloride. The sequence is that of Putative multidrug resistance outer membrane protein MdtQ (mdtQ) from Escherichia coli (strain K12).